The chain runs to 217 residues: Nuclear transcription factor Y subunit C-3 (217 aa).

The segment covering 1-28 (MDQQGQSSAMNYGSNPYQTNAMTTTPTG) has biased composition (polar residues). Disordered stretches follow at residues 1-29 (MDQQ…PTGS) and 198-217 (PYMG…DPDN).

The protein belongs to the NFYC/HAP5 subunit family. In terms of assembly, heterotrimeric transcription factor composed of three components, NF-YA, NF-YB and NF-YC. NF-YB and NF-YC must interact and dimerize for NF-YA association and DNA binding. Ubiquitous.

It localises to the nucleus. In terms of biological role, stimulates the transcription of various genes by recognizing and binding to a CCAAT motif in promoters. The sequence is that of Nuclear transcription factor Y subunit C-3 (NFYC3) from Arabidopsis thaliana (Mouse-ear cress).